Reading from the N-terminus, the 104-residue chain is Signal recognition particle 19 kDa protein (104 aa).

It belongs to the SRP19 family. As to quaternary structure, part of the signal recognition particle protein translocation system, which is composed of SRP and FtsY. Archaeal SRP consists of a 7S RNA molecule of 300 nucleotides and two protein subunits: SRP54 and SRP19.

Its subcellular location is the cytoplasm. In terms of biological role, involved in targeting and insertion of nascent membrane proteins into the cytoplasmic membrane. Binds directly to 7S RNA and mediates binding of the 54 kDa subunit of the SRP. This Archaeoglobus fulgidus (strain ATCC 49558 / DSM 4304 / JCM 9628 / NBRC 100126 / VC-16) protein is Signal recognition particle 19 kDa protein.